Reading from the N-terminus, the 179-residue chain is Bifunctional protein PyrR (179 aa).

Positions 99-111 (VILVDDVLYTGRT) match the PRPP-binding motif.

Belongs to the purine/pyrimidine phosphoribosyltransferase family. PyrR subfamily. Homodimer and homohexamer; in equilibrium.

It carries out the reaction UMP + diphosphate = 5-phospho-alpha-D-ribose 1-diphosphate + uracil. Functionally, regulates transcriptional attenuation of the pyrimidine nucleotide (pyr) operon by binding in a uridine-dependent manner to specific sites on pyr mRNA. This disrupts an antiterminator hairpin in the RNA and favors formation of a downstream transcription terminator, leading to a reduced expression of downstream genes. Also displays a weak uracil phosphoribosyltransferase activity which is not physiologically significant. This chain is Bifunctional protein PyrR, found in Limosilactobacillus fermentum (strain NBRC 3956 / LMG 18251) (Lactobacillus fermentum).